The primary structure comprises 309 residues: Porphobilinogen deaminase (309 aa).

C240 is modified (S-(dipyrrolylmethanemethyl)cysteine).

This sequence belongs to the HMBS family. Monomer. It depends on dipyrromethane as a cofactor.

It carries out the reaction 4 porphobilinogen + H2O = hydroxymethylbilane + 4 NH4(+). Its pathway is porphyrin-containing compound metabolism; protoporphyrin-IX biosynthesis; coproporphyrinogen-III from 5-aminolevulinate: step 2/4. Functionally, tetrapolymerization of the monopyrrole PBG into the hydroxymethylbilane pre-uroporphyrinogen in several discrete steps. The chain is Porphobilinogen deaminase from Chromobacterium violaceum (strain ATCC 12472 / DSM 30191 / JCM 1249 / CCUG 213 / NBRC 12614 / NCIMB 9131 / NCTC 9757 / MK).